The primary structure comprises 381 residues: Deoxyguanosinetriphosphate triphosphohydrolase-like protein (381 aa).

The HD domain occupies 76 to 203 (RMTHTLEVAG…ADLSDEIAYT (128 aa)).

Belongs to the dGTPase family. Type 2 subfamily.

In Leptospira borgpetersenii serovar Hardjo-bovis (strain JB197), this protein is Deoxyguanosinetriphosphate triphosphohydrolase-like protein.